Consider the following 838-residue polypeptide: Urease (838 aa).

In terms of domain architecture, Urease spans 402-838; that stretch reads GGFDTHIHFI…LPLTQDYFVY (437 aa). Ni(2+)-binding residues include H407, H409, and K490. K490 is modified (N6-carboxylysine). H492 lines the substrate pocket. Ni(2+)-binding residues include H519 and H545. Catalysis depends on H593, which acts as the Proton donor. A Ni(2+)-binding site is contributed by D633.

It in the C-terminal section; belongs to the metallo-dependent hydrolases superfamily. Urease alpha subunit family. As to quaternary structure, homohexamer. Ni cation is required as a cofactor. In terms of processing, carboxylation allows a single lysine to coordinate two nickel ions.

The catalysed reaction is urea + 2 H2O + H(+) = hydrogencarbonate + 2 NH4(+). It functions in the pathway nitrogen metabolism; urea degradation; CO(2) and NH(3) from urea (urease route): step 1/1. The protein is Urease (ure1) of Aspergillus fumigatus (strain ATCC MYA-4609 / CBS 101355 / FGSC A1100 / Af293) (Neosartorya fumigata).